Reading from the N-terminus, the 381-residue chain is Tryptophan--tRNA ligase (381 aa).

Residues 82–90 (PSLGMHIGH) carry the 'HIGH' region motif. Positions 254 to 258 (KMSSS) match the 'KMSKS' region motif.

It belongs to the class-I aminoacyl-tRNA synthetase family.

The protein resides in the cytoplasm. It carries out the reaction tRNA(Trp) + L-tryptophan + ATP = L-tryptophyl-tRNA(Trp) + AMP + diphosphate + H(+). The chain is Tryptophan--tRNA ligase from Sulfurisphaera tokodaii (strain DSM 16993 / JCM 10545 / NBRC 100140 / 7) (Sulfolobus tokodaii).